The sequence spans 976 residues: Apical junction component 1 homolog (976 aa).

The tract at residues 21–49 (ATPGPASKCSPCERSVARPAEPAPFNKRH) is disordered. At S52 the chain carries Phosphoserine. Disordered regions lie at residues 61–136 (GPAM…EPAY), 220–242 (PQFH…PTPS), and 264–294 (YAER…RGSF). Residues 98-113 (RAPPGLTPAPASPPVL) show a composition bias toward pro residues. Over residues 116–134 (RGREAQRAARAEASPRREP) the composition is skewed to basic and acidic residues. A Phosphoserine modification is found at S129. Residue R322 is modified to Omega-N-methylarginine. Residues 412 to 443 (LQVVPPSDPDPLLASWHGGTGTSPPRLATDSR) are disordered. Residues S468, S509, and S512 each carry the phosphoserine modification. Disordered stretches follow at residues 539–574 (DLRA…SGRQ) and 614–660 (LDSR…ADED). Low complexity-rich tracts occupy residues 616-625 (SRPAGSGAPA) and 633-655 (PASA…SPEP). Residue R749 is modified to Asymmetric dimethylarginine; alternate. Position 749 is an omega-N-methylarginine; alternate (R749). The disordered stretch occupies residues 855–888 (GSPARPPPARSREPDMETLILTPPPGTAGLDQDG).

The protein resides in the apical cell membrane. It is found in the cell projection. It localises to the cilium. The protein localises to the cell junction. Its subcellular location is the adherens junction. May be involved in the control of adherens junction integrity. This chain is Apical junction component 1 homolog, found in Homo sapiens (Human).